Reading from the N-terminus, the 557-residue chain is Selenoprotein N (557 aa).

A compositionally biased stretch (basic and acidic residues) spans 1-21; sequence MAADVDKTPAGEQKDDHEDRG. Residues 1-28 are disordered; sequence MAADVDKTPAGEQKDDHEDRGTPSSRRG. The helical transmembrane segment at 35 to 55 threads the bilayer; sequence ISSLFIIAAIPVIGVCIKYYL. U430 is a non-standard amino acid (selenocysteine). Residues N451 and N499 are each glycosylated (N-linked (GlcNAc...) asparagine).

As to quaternary structure, interacts with ryr3.

It is found in the endoplasmic reticulum membrane. Plays an important role in cell protection against oxidative stress and in the regulation of redox-related calcium homeostasis. Regulates the calcium level of the ER by protecting the calcium pump ATP2A2 against the oxidoreductase ERO1A-mediated oxidative damage. Acts as a modulator of ryanodine receptor (RyR) activity: protects RyR from oxidation due to increased oxidative stress, or directly controls the RyR redox state, regulating the RyR-mediated calcium mobilization required for normal muscle development and differentiation. Plays an important role in muscle development and differentiation during early development. Required for development of the slow muscle fiber lineage. Required for the correct organization and attachment of the myofibrils, as well as for the continuity and integrity of the connective tissue that forms the myoseptum. This is Selenoprotein N from Danio rerio (Zebrafish).